The primary structure comprises 206 residues: MDIVAETQIEEESLIPDATSTPLETEVVADTTLRKTALHLAGVDNLSEEQVKGFISAYAPESQCTIEWINDNECNVVYADDDVSRNALFHLIMESPTEFSEELEYQTKPHPTVPTCQFKIRYARYGDKKVKSAHLYSRYYLFHGDPREEKAQKSKSKSRNQDERGSPLDERLGPKVSDLTLMERIFQVRRKPRKSRRDRRSRVSKR.

Positions 147 to 206 (REEKAQKSKSKSRNQDERGSPLDERLGPKVSDLTLMERIFQVRRKPRKSRRDRRSRVSKR) are disordered. Residues 159-173 (RNQDERGSPLDERLG) are compositionally biased toward basic and acidic residues. Basic residues predominate over residues 187–206 (QVRRKPRKSRRDRRSRVSKR).

This is an uncharacterized protein from Schizosaccharomyces pombe (strain 972 / ATCC 24843) (Fission yeast).